The chain runs to 418 residues: Protein MAEA homolog (418 aa).

The 33-residue stretch at 141–173 (NNTKLKRILVDYMLRMSYFETATKLSESSNIMD) folds into the LisH domain. In terms of domain architecture, CTLH spans 179 to 236 (IFREAKKVIDALKNREVASALTWCADNKTRLKKSKSKFEFQLRLQEFIELVRVDTAES). The RING-Gid-type zinc-finger motif lies at 330–403 (CTKEDPLSQE…NGGKITCPRT (74 aa)).

As to quaternary structure, interacts with RANBPM.

The protein localises to the cytoplasm. This chain is Protein MAEA homolog, found in Arabidopsis thaliana (Mouse-ear cress).